The primary structure comprises 360 residues: Phospho-N-acetylmuramoyl-pentapeptide-transferase (360 aa).

The next 10 helical transmembrane spans lie at 26-46 (AILA…KLIE), 74-94 (MGGL…GDLG), 97-117 (YVWV…IDDY), 132-152 (WKYI…FYST), 168-188 (ILPQ…VGAS), 199-219 (GLAI…AYLS), 236-256 (SGEL…FLWF), 263-283 (VFMG…IAVL), 288-308 (ILLV…ILQV), and 338-358 (VIVR…ATLK).

It belongs to the glycosyltransferase 4 family. MraY subfamily. Mg(2+) serves as cofactor.

The protein resides in the cell inner membrane. It catalyses the reaction UDP-N-acetyl-alpha-D-muramoyl-L-alanyl-gamma-D-glutamyl-meso-2,6-diaminopimeloyl-D-alanyl-D-alanine + di-trans,octa-cis-undecaprenyl phosphate = di-trans,octa-cis-undecaprenyl diphospho-N-acetyl-alpha-D-muramoyl-L-alanyl-D-glutamyl-meso-2,6-diaminopimeloyl-D-alanyl-D-alanine + UMP. Its pathway is cell wall biogenesis; peptidoglycan biosynthesis. Its function is as follows. Catalyzes the initial step of the lipid cycle reactions in the biosynthesis of the cell wall peptidoglycan: transfers peptidoglycan precursor phospho-MurNAc-pentapeptide from UDP-MurNAc-pentapeptide onto the lipid carrier undecaprenyl phosphate, yielding undecaprenyl-pyrophosphoryl-MurNAc-pentapeptide, known as lipid I. In Shewanella amazonensis (strain ATCC BAA-1098 / SB2B), this protein is Phospho-N-acetylmuramoyl-pentapeptide-transferase.